Here is a 448-residue protein sequence, read N- to C-terminus: Phosphoglucosamine mutase (448 aa).

The Phosphoserine intermediate role is filled by Ser100. Residues Ser100, Asp240, Asp242, and Asp244 each coordinate Mg(2+). At Ser100 the chain carries Phosphoserine.

It belongs to the phosphohexose mutase family. Requires Mg(2+) as cofactor. Activated by phosphorylation.

It carries out the reaction alpha-D-glucosamine 1-phosphate = D-glucosamine 6-phosphate. Its function is as follows. Catalyzes the conversion of glucosamine-6-phosphate to glucosamine-1-phosphate. The polypeptide is Phosphoglucosamine mutase (Bacillus cereus (strain G9842)).